A 120-amino-acid chain; its full sequence is Ribosome-binding factor A (120 aa).

It belongs to the RbfA family. As to quaternary structure, monomer. Binds 30S ribosomal subunits, but not 50S ribosomal subunits or 70S ribosomes.

Its subcellular location is the cytoplasm. One of several proteins that assist in the late maturation steps of the functional core of the 30S ribosomal subunit. Associates with free 30S ribosomal subunits (but not with 30S subunits that are part of 70S ribosomes or polysomes). Required for efficient processing of 16S rRNA. May interact with the 5'-terminal helix region of 16S rRNA. In Chlamydia abortus (strain DSM 27085 / S26/3) (Chlamydophila abortus), this protein is Ribosome-binding factor A.